Consider the following 397-residue polypeptide: Putative serine/threonine-protein kinase R301 (397 aa).

The Protein kinase domain maps to 25-397 (QIKSTSVGSG…IIRHFNSPRL (373 aa)). ATP is bound by residues 31–39 (VGSGGSDNI) and K53. D218 (proton acceptor) is an active-site residue.

It belongs to the protein kinase superfamily. Ser/Thr protein kinase family.

The protein localises to the virion. The catalysed reaction is L-seryl-[protein] + ATP = O-phospho-L-seryl-[protein] + ADP + H(+). The enzyme catalyses L-threonyl-[protein] + ATP = O-phospho-L-threonyl-[protein] + ADP + H(+). In Acanthamoeba polyphaga (Amoeba), this protein is Putative serine/threonine-protein kinase R301.